A 139-amino-acid polypeptide reads, in one-letter code: uncharacterized protein (139 aa).

A run of 2 helical transmembrane segments spans residues 71–91 and 97–117; these read LFSALLMYIVQLFTLLVATLL and ENELIRAILIFMLTALSFVMV.

Belongs to the RseC family.

It localises to the cell inner membrane. This is an uncharacterized protein from Haemophilus influenzae (strain ATCC 51907 / DSM 11121 / KW20 / Rd).